The following is a 501-amino-acid chain: ATP synthase subunit alpha (501 aa).

Residue Gly169–Thr176 participates in ATP binding.

This sequence belongs to the ATPase alpha/beta chains family. F-type ATPases have 2 components, CF(1) - the catalytic core - and CF(0) - the membrane proton channel. CF(1) has five subunits: alpha(3), beta(3), gamma(1), delta(1), epsilon(1). CF(0) has three main subunits: a(1), b(2) and c(9-12). The alpha and beta chains form an alternating ring which encloses part of the gamma chain. CF(1) is attached to CF(0) by a central stalk formed by the gamma and epsilon chains, while a peripheral stalk is formed by the delta and b chains.

It is found in the cell inner membrane. It catalyses the reaction ATP + H2O + 4 H(+)(in) = ADP + phosphate + 5 H(+)(out). Functionally, produces ATP from ADP in the presence of a proton gradient across the membrane. The alpha chain is a regulatory subunit. The chain is ATP synthase subunit alpha from Campylobacter jejuni subsp. doylei (strain ATCC BAA-1458 / RM4099 / 269.97).